Consider the following 94-residue polypeptide: Co-chaperonin GroES (94 aa).

It belongs to the GroES chaperonin family. As to quaternary structure, heptamer of 7 subunits arranged in a ring. Interacts with the chaperonin GroEL.

It localises to the cytoplasm. Its function is as follows. Together with the chaperonin GroEL, plays an essential role in assisting protein folding. The GroEL-GroES system forms a nano-cage that allows encapsulation of the non-native substrate proteins and provides a physical environment optimized to promote and accelerate protein folding. GroES binds to the apical surface of the GroEL ring, thereby capping the opening of the GroEL channel. The protein is Co-chaperonin GroES of Streptococcus pneumoniae (strain CGSP14).